The following is a 644-amino-acid chain: L-aspartate oxidase 2-a, chloroplastic (644 aa).

Residues Ser94 to Ala97, Lys116, Asn123 to Gly130, and Asp294 each bind FAD. Arg369 acts as the Proton donor/acceptor in catalysis. Residues Glu454 and Ser470–Leu471 contribute to the FAD site.

Belongs to the FAD-dependent oxidoreductase 2 family. NadB subfamily. Requires FAD as cofactor.

The protein resides in the plastid. The protein localises to the chloroplast. The catalysed reaction is L-aspartate + O2 = iminosuccinate + H2O2. The protein operates within alkaloid biosynthesis; nicotine biosynthesis. It functions in the pathway cofactor biosynthesis; NAD(+) biosynthesis; iminoaspartate from L-aspartate (oxidase route): step 1/1. Involved in the biosynthesis of pyridine alkaloid natural products, leading mainly to the production of anabasine, anatabine, nicotine and nornicotine, effective deterrents against herbivores with antiparasitic and pesticide properties (neurotoxins); nornicotine serves as the precursor in the synthesis of the carcinogen compound N'-nitrosonornicotine (NNN). Catalyzes the oxidation of L-aspartate to iminoaspartate. This is L-aspartate oxidase 2-a, chloroplastic from Nicotiana tabacum (Common tobacco).